We begin with the raw amino-acid sequence, 236 residues long: Regulatory protein cys-3 (236 aa).

The interval Thr-26 to Arg-89 is disordered. The span at Gly-28–Pro-37 shows a compositional bias: polar residues. A bZIP domain is found at Leu-99–Lys-162. Residues Lys-105–Lys-137 form a basic motif region. The tract at residues Leu-141–Leu-155 is leucine-zipper. The tract at residues Ala-189–Asp-236 is disordered. Over residues Asp-193–Ser-211 the composition is skewed to basic and acidic residues. Positions Ser-212 to Asp-223 are enriched in low complexity.

It belongs to the bZIP family. GCN4 subfamily. As to quaternary structure, binds DNA as a dimer.

It localises to the nucleus. In terms of biological role, turns on the expression of structural genes which encode sulfur-catabolic enzymes. Binds to sequence elements upstream of these genes. This Neurospora crassa (strain ATCC 24698 / 74-OR23-1A / CBS 708.71 / DSM 1257 / FGSC 987) protein is Regulatory protein cys-3 (cys-3).